Consider the following 133-residue polypeptide: Small ribosomal subunit protein uS12 (133 aa).

Asp-89 bears the 3-methylthioaspartic acid mark. The segment at 103-133 (DTAGVAGRTQRRSKYGAKRPKPGQAAPAKKK) is disordered. Positions 111–123 (TQRRSKYGAKRPK) are enriched in basic residues. Low complexity predominate over residues 124–133 (PGQAAPAKKK).

This sequence belongs to the universal ribosomal protein uS12 family. As to quaternary structure, part of the 30S ribosomal subunit. Contacts proteins S8 and S17. May interact with IF1 in the 30S initiation complex.

In terms of biological role, with S4 and S5 plays an important role in translational accuracy. Interacts with and stabilizes bases of the 16S rRNA that are involved in tRNA selection in the A site and with the mRNA backbone. Located at the interface of the 30S and 50S subunits, it traverses the body of the 30S subunit contacting proteins on the other side and probably holding the rRNA structure together. The combined cluster of proteins S8, S12 and S17 appears to hold together the shoulder and platform of the 30S subunit. This Bacteroides thetaiotaomicron (strain ATCC 29148 / DSM 2079 / JCM 5827 / CCUG 10774 / NCTC 10582 / VPI-5482 / E50) protein is Small ribosomal subunit protein uS12.